The primary structure comprises 408 residues: Chaperonin GroEL (408 aa).

ATP contacts are provided by residues 30–33 (TLGP), Lys-51, and 87–91 (DGTTT).

This sequence belongs to the chaperonin (HSP60) family. In terms of assembly, forms a cylinder of 14 subunits composed of two heptameric rings stacked back-to-back. Interacts with the co-chaperonin GroES.

The protein localises to the cytoplasm. It carries out the reaction ATP + H2O + a folded polypeptide = ADP + phosphate + an unfolded polypeptide.. Together with its co-chaperonin GroES, plays an essential role in assisting protein folding. The GroEL-GroES system forms a nano-cage that allows encapsulation of the non-native substrate proteins and provides a physical environment optimized to promote and accelerate protein folding. The polypeptide is Chaperonin GroEL (Rickettsia rickettsii).